Consider the following 810-residue polypeptide: Lon protease (810 aa).

One can recognise a Lon N-terminal domain in the interval leucine 32 to threonine 226. Glycine 376–threonine 383 contacts ATP. In terms of domain architecture, Lon proteolytic spans lysine 612–glutamate 791. Active-site residues include serine 697 and lysine 740.

This sequence belongs to the peptidase S16 family. Homohexamer. Organized in a ring with a central cavity.

Its subcellular location is the cytoplasm. The catalysed reaction is Hydrolysis of proteins in presence of ATP.. Its function is as follows. ATP-dependent serine protease that mediates the selective degradation of mutant and abnormal proteins as well as certain short-lived regulatory proteins. Required for cellular homeostasis and for survival from DNA damage and developmental changes induced by stress. Degrades polypeptides processively to yield small peptide fragments that are 5 to 10 amino acids long. Binds to DNA in a double-stranded, site-specific manner. This is Lon protease from Fervidobacterium nodosum (strain ATCC 35602 / DSM 5306 / Rt17-B1).